A 244-amino-acid chain; its full sequence is Probable transcriptional regulatory protein CHAB381_1426 (244 aa).

It belongs to the TACO1 family.

It is found in the cytoplasm. The protein is Probable transcriptional regulatory protein CHAB381_1426 of Campylobacter hominis (strain ATCC BAA-381 / DSM 21671 / CCUG 45161 / LMG 19568 / NCTC 13146 / CH001A).